A 529-amino-acid polypeptide reads, in one-letter code: Glycylpeptide N-tetradecanoyltransferase 2 (529 aa).

Residues 1–82 (MAEDSESAAS…QEIKIQQSSK (82 aa)) are disordered. A compositionally biased stretch (acidic residues) spans 15–32 (ELDDQDTCGIDGDNEEET). S38 carries the phosphoserine modification. The segment covering 46 to 57 (KKKKKKQKRKKE) has biased composition (basic residues). A compositionally biased stretch (polar residues) spans 61–82 (SGGTKSDSASDSQEIKIQQSSK). Residues W153, L281, V283, S289, R291, V292, and A293 each coordinate tetradecanoyl-CoA.

Belongs to the NMT family.

It localises to the cytoplasm. It is found in the membrane. The enzyme catalyses N-terminal glycyl-[protein] + tetradecanoyl-CoA = N-tetradecanoylglycyl-[protein] + CoA + H(+). It catalyses the reaction N-terminal glycyl-L-lysyl-[protein] + tetradecanoyl-CoA = N-terminal glycyl-(N(6)-tetradecanoyl)-L-lysyl-[protein] + CoA + H(+). In terms of biological role, adds a myristoyl group to the N-terminal glycine residue of certain cellular and viral proteins. Also able to mediate N-terminal lysine myristoylation of proteins: catalyzes myristoylation of ARF6 on both 'Gly-2' and 'Lys-3'. Lysine myristoylation is required to maintain ARF6 on membranes during the GTPase cycle. The protein is Glycylpeptide N-tetradecanoyltransferase 2 (Nmt2) of Mus musculus (Mouse).